Consider the following 627-residue polypeptide: Plastin-3 (627 aa).

EF-hand domains are found at residues 8 to 43 (EELEELREAFGKVDLNGNGFICDHELHDLFKEANLP) and 48 to 83 (KVREIIQKLMEEGDKNKDNMISFDEFVSIFQELKSG). Asp21, Asn23, Asn25, Glu32, Asp61, Asn63, Asp65, Met67, and Glu72 together coordinate Ca(2+). Actin-binding regions lie at residues 105–378 (TSEL…ALTK) and 379–624 (PENQ…GRGM). Calponin-homology (CH) domains follow at residues 119–235 (EEER…KIGL), 263–374 (LSPE…NKYP), 393–503 (TREE…RRYT), and 515–624 (KVND…GRGM).

It is found in the cytoplasm. Functionally, actin-bundling protein. In Danio rerio (Zebrafish), this protein is Plastin-3 (pls3).